Consider the following 136-residue polypeptide: Small ribosomal subunit protein uS9 (136 aa).

The interval 95 to 136 is disordered; that stretch reads GLSPDNRKPLKTEGHLSRDPRSKERKKYGLKKARKAGQFSKR. The segment covering 99–116 has biased composition (basic and acidic residues); that stretch reads DNRKPLKTEGHLSRDPRS. Over residues 117–136 the composition is skewed to basic residues; the sequence is KERKKYGLKKARKAGQFSKR.

Belongs to the universal ribosomal protein uS9 family.

This Prochlorococcus marinus subsp. pastoris (strain CCMP1986 / NIES-2087 / MED4) protein is Small ribosomal subunit protein uS9.